We begin with the raw amino-acid sequence, 357 residues long: Peptide chain release factor 1 (357 aa).

Q236 carries the post-translational modification N5-methylglutamine.

This sequence belongs to the prokaryotic/mitochondrial release factor family. In terms of processing, methylated by PrmC. Methylation increases the termination efficiency of RF1.

The protein resides in the cytoplasm. Its function is as follows. Peptide chain release factor 1 directs the termination of translation in response to the peptide chain termination codons UAG and UAA. In Mycobacterium avium (strain 104), this protein is Peptide chain release factor 1.